We begin with the raw amino-acid sequence, 430 residues long: Long-chain specific acyl-CoA dehydrogenase, mitochondrial (430 aa).

Residues 1–30 (MAARLLLRSLRVLKARSAPRPPPSARCSHS) constitute a mitochondrion transit peptide. Positions 17–39 (SAPRPPPSARCSHSGAEARLETP) are disordered. N6-acetyllysine is present on lysine 42. A phosphoserine mark is found at serine 54 and serine 55. 2 positions are modified to N6-acetyllysine; alternate: lysine 66 and lysine 81. An N6-succinyllysine; alternate mark is found at lysine 66 and lysine 81. Lysine 92 and lysine 95 each carry N6-acetyllysine. Position 165 is an N6-succinyllysine (lysine 165). Residue 170–179 (IAMTEPGAGS) coordinates FAD. Serine 179 provides a ligand contact to substrate. Serine 191 carries the post-translational modification Phosphoserine. Residue 203-205 (FIT) participates in FAD binding. 227–228 (AH) contacts substrate. Lysine 240 bears the N6-succinyllysine mark. Residues lysine 254 and lysine 279 each carry the N6-acetyllysine; alternate modification. An N6-succinyllysine; alternate mark is found at lysine 254 and lysine 279. Substrate-binding positions include tyrosine 282 and 289–292 (PQER). The active-site Proton acceptor is the glutamate 291. Arginine 317 is a binding site for FAD. N6-acetyllysine is present on lysine 318. N6-acetyllysine; alternate is present on lysine 322. Lysine 322 carries the post-translational modification N6-succinyllysine; alternate. Residue glutamine 328 coordinates FAD. Residue lysine 358 is modified to N6-acetyllysine. Serine 362 is subject to Phosphoserine. 385-389 (QLHGG) contributes to the FAD binding site. 412-413 (GG) is a binding site for substrate. 414-416 (TNE) contacts FAD.

Belongs to the acyl-CoA dehydrogenase family. Homotetramer. It depends on FAD as a cofactor. Acetylation at Lys-318 and Lys-322 in proximity of the cofactor-binding sites strongly reduces catalytic activity. These sites are deacetylated by SIRT3. As to expression, expressed in heart, skeletal muscle, kidney, and brain. Expressed in liver (at protein level).

It is found in the mitochondrion matrix. The enzyme catalyses a long-chain 2,3-saturated fatty acyl-CoA + oxidized [electron-transfer flavoprotein] + H(+) = a long-chain (2E)-enoyl-CoA + reduced [electron-transfer flavoprotein]. It carries out the reaction oxidized [electron-transfer flavoprotein] + hexadecanoyl-CoA + H(+) = (2E)-hexadecenoyl-CoA + reduced [electron-transfer flavoprotein]. It catalyses the reaction hexanoyl-CoA + oxidized [electron-transfer flavoprotein] + H(+) = (2E)-hexenoyl-CoA + reduced [electron-transfer flavoprotein]. The catalysed reaction is octanoyl-CoA + oxidized [electron-transfer flavoprotein] + H(+) = (2E)-octenoyl-CoA + reduced [electron-transfer flavoprotein]. The enzyme catalyses decanoyl-CoA + oxidized [electron-transfer flavoprotein] + H(+) = (2E)-decenoyl-CoA + reduced [electron-transfer flavoprotein]. It carries out the reaction dodecanoyl-CoA + oxidized [electron-transfer flavoprotein] + H(+) = (2E)-dodecenoyl-CoA + reduced [electron-transfer flavoprotein]. It catalyses the reaction tetradecanoyl-CoA + oxidized [electron-transfer flavoprotein] + H(+) = (2E)-tetradecenoyl-CoA + reduced [electron-transfer flavoprotein]. The catalysed reaction is octadecanoyl-CoA + oxidized [electron-transfer flavoprotein] + H(+) = (2E)-octadecenoyl-CoA + reduced [electron-transfer flavoprotein]. The enzyme catalyses eicosanoyl-CoA + oxidized [electron-transfer flavoprotein] + H(+) = (2E)-eicosenoyl-CoA + reduced [electron-transfer flavoprotein]. It carries out the reaction docosanoyl-CoA + oxidized [electron-transfer flavoprotein] + H(+) = (2E)-docosenoyl-CoA + reduced [electron-transfer flavoprotein]. It catalyses the reaction tetracosanoyl-CoA + oxidized [electron-transfer flavoprotein] + H(+) = (2E)-tetracosenoyl-CoA + reduced [electron-transfer flavoprotein]. The catalysed reaction is (5E)-tetradecenoyl-CoA + oxidized [electron-transfer flavoprotein] + H(+) = (2E,5E)-tetradecadienoyl-CoA + reduced [electron-transfer flavoprotein]. The enzyme catalyses (5Z)-tetradecenoyl-CoA + oxidized [electron-transfer flavoprotein] + H(+) = (2E,5Z)-tetradecadienoyl-CoA + reduced [electron-transfer flavoprotein]. It carries out the reaction oxidized [electron-transfer flavoprotein] + (9Z)-octadecenoyl-CoA + H(+) = (2E,9Z)-octadecadienoyl-CoA + reduced [electron-transfer flavoprotein]. It functions in the pathway lipid metabolism; mitochondrial fatty acid beta-oxidation. Its function is as follows. Long-chain specific acyl-CoA dehydrogenase is one of the acyl-CoA dehydrogenases that catalyze the first step of mitochondrial fatty acid beta-oxidation, an aerobic process breaking down fatty acids into acetyl-CoA and allowing the production of energy from fats. The first step of fatty acid beta-oxidation consists in the removal of one hydrogen from C-2 and C-3 of the straight-chain fatty acyl-CoA thioester, resulting in the formation of trans-2-enoyl-CoA. Among the different mitochondrial acyl-CoA dehydrogenases, long-chain specific acyl-CoA dehydrogenase can act on saturated and unsaturated acyl-CoAs with 6 to 24 carbons with a preference for 8 to 18 carbons long primary chains. The protein is Long-chain specific acyl-CoA dehydrogenase, mitochondrial of Mus musculus (Mouse).